Here is a 104-residue protein sequence, read N- to C-terminus: Flagellar hook-basal body complex protein FliE (104 aa).

This sequence belongs to the FliE family.

It localises to the bacterial flagellum basal body. The protein is Flagellar hook-basal body complex protein FliE of Salmonella arizonae (strain ATCC BAA-731 / CDC346-86 / RSK2980).